The following is a 424-amino-acid chain: Gamma-glutamyl phosphate reductase (424 aa).

The protein belongs to the gamma-glutamyl phosphate reductase family.

The protein resides in the cytoplasm. It carries out the reaction L-glutamate 5-semialdehyde + phosphate + NADP(+) = L-glutamyl 5-phosphate + NADPH + H(+). The protein operates within amino-acid biosynthesis; L-proline biosynthesis; L-glutamate 5-semialdehyde from L-glutamate: step 2/2. Catalyzes the NADPH-dependent reduction of L-glutamate 5-phosphate into L-glutamate 5-semialdehyde and phosphate. The product spontaneously undergoes cyclization to form 1-pyrroline-5-carboxylate. The protein is Gamma-glutamyl phosphate reductase of Parvibaculum lavamentivorans (strain DS-1 / DSM 13023 / NCIMB 13966).